We begin with the raw amino-acid sequence, 292 residues long: E3 ubiquitin-protein ligase RNF144A (292 aa).

The tract at residues 16 to 236 is TRIAD supradomain; it reads PLVSCKLCLG…YDKGPCRNKL (221 aa). Residues C20, C23, C43, C46, C111, C116, C135, C138, C143, C146, H151, C156, C185, and C188 each coordinate Zn(2+). Residues 20–70 form an RING-type 1 zinc finger; sequence CKLCLGEYPAEQMTTIAQCQCIFCTLCLKQYVELLIKEGLETAISCPDAAC. The segment at 91-156 adopts an IBR-type zinc-finger fold; sequence QRYKKLQFER…KARWHPGQGC (66 aa). The segment at 185–214 adopts an RING-type 2; atypical zinc-finger fold; that stretch reads CPKCRVYIERDEGCAQMMCKNCKHAFCWYC. C198 is an active-site residue. Zn(2+) contacts are provided by C203, C206, C211, C214, H226, and C232. The helical transmembrane segment at 250–270 threads the bilayer; sequence VVGIFAGFGLLLLVASPFLLL.

This sequence belongs to the RBR family. RNF144 subfamily. Self-associates. Interacts with UBE2L3. In terms of processing, autoubiquitinated.

It localises to the cell membrane. The protein localises to the cytoplasmic vesicle membrane. The enzyme catalyses [E2 ubiquitin-conjugating enzyme]-S-ubiquitinyl-L-cysteine + [acceptor protein]-L-lysine = [E2 ubiquitin-conjugating enzyme]-L-cysteine + [acceptor protein]-N(6)-ubiquitinyl-L-lysine.. The protein operates within protein modification; protein ubiquitination. In terms of biological role, E3 ubiquitin-protein ligase which accepts ubiquitin from E2 ubiquitin-conjugating enzymes UBE2L3 and UBE2L6 in the form of a thioester and then directly transfers the ubiquitin to targeted substrates. Mediates the ubiquitination and degradation of the DNA damage kinase PRKDC during DNA damage. Positively regulates DNA virus or exogenous cytosolic DNA-triggered innate immune response by mediating STING1 ubiquitination and increasing its 'Lys-6'-linked ubiquitination and translocation from the endoplasmic reticulum to the Golgi leading to downstream signaling pathways. Plays a positive role in EGF-dependent cell proliferation by prolonging EGF/EGFR signaling during EGF stimulation through EGFR ubiquitination. Increases ERK activity independently of EGFR signaling by promoting polyubiquitination and subsequent degradation of VRK3 in the cytosol. In Mus musculus (Mouse), this protein is E3 ubiquitin-protein ligase RNF144A (Rnf144a).